Here is a 1150-residue protein sequence, read N- to C-terminus: C5a peptidase (1150 aa).

A signal peptide spans 1–31 (MRKKQKLPFDKLAIALMSTSILLNAQSDIKA). Positions 33–73 (TVTEDTPAAEQAVETPQPTAVSEEVPSSKETKTPQTPDNAE) are disordered. In terms of domain architecture, Peptidase S8 spans 99–581 (KATIRDLNDP…AGAVDAKKAS (483 aa)). Active-site charge relay system residues include Asp130, His193, and Ser512. 2 stretches are compositionally biased toward basic and acidic residues: residues 1029–1054 (EGHS…KPEQ) and 1061–1073 (PDKK…EKDS). The segment at 1029-1116 (EGHSNKPEQD…RDQLPTTNDK (88 aa)) is disordered. A run of 3 repeats spans residues 1034-1050 (KPEQ…KPEA), 1051-1067 (KPEQ…KPET), and 1068-1084 (KPEK…TPQK). The tract at residues 1034-1084 (KPEQDGSDQAPDKKPEAKPEQDGSGQTPDKKPETKPEKDSSGQTPGKTPQK) is 3 X 17 AA tandem repeats. The segment covering 1075 to 1089 (GQTPGKTPQKGQPSR) has biased composition (polar residues). The LPXTG sorting signal motif lies at 1110–1114 (LPTTN). A Pentaglycyl murein peptidoglycan amidated threonine modification is found at Thr1113. A propeptide spans 1114–1150 (NDKDTNRLHLLKLVMTTFFFGLVAHIFKTKRQKETKK) (removed by sortase).

Belongs to the peptidase S8 family. Post-translationally, cleaved by SpeB protease; leading to its degradation. Degradation by SpeB is probably strictly regulated to preserve integrity of C5a peptidase.

Its subcellular location is the secreted. The protein resides in the cell wall. It catalyses the reaction The primary cleavage site is at 67-His-|-Lys-68 in human C5a with a minor secondary cleavage site at 58-Ala-|-Ser-59.. Functionally, this virulence factor of S.pyogenes specifically cleaves the human serum chemotaxin C5a at '68-Lys-|-Asp-69' bond near its C-terminus, destroying its ability to serve as a chemoattractant. This Streptococcus pyogenes serotype M18 (strain MGAS8232) protein is C5a peptidase (scpA).